The chain runs to 130 residues: Small ribosomal subunit protein uS8 (130 aa).

The protein belongs to the universal ribosomal protein uS8 family. In terms of assembly, part of the 30S ribosomal subunit.

One of the primary rRNA binding proteins, it binds directly to 16S rRNA central domain where it helps coordinate assembly of the platform of the 30S subunit. In Methanococcus vannielii (strain ATCC 35089 / DSM 1224 / JCM 13029 / OCM 148 / SB), this protein is Small ribosomal subunit protein uS8.